The sequence spans 305 residues: tRNA uridine(34) hydroxylase (305 aa).

Residues 136 to 230 (ADENTVVVDK…YLEEVPREQS (95 aa)) enclose the Rhodanese domain. The active-site Cysteine persulfide intermediate is Cys-190.

This sequence belongs to the TrhO family.

It catalyses the reaction uridine(34) in tRNA + AH2 + O2 = 5-hydroxyuridine(34) in tRNA + A + H2O. In terms of biological role, catalyzes oxygen-dependent 5-hydroxyuridine (ho5U) modification at position 34 in tRNAs. The chain is tRNA uridine(34) hydroxylase from Brucella melitensis biotype 1 (strain ATCC 23456 / CCUG 17765 / NCTC 10094 / 16M).